A 394-amino-acid polypeptide reads, in one-letter code: Obg-like ATPase 1 (394 aa).

Residues Leu-21–Leu-285 form the OBG-type G domain. Residue Asn-30–Thr-35 coordinates ATP. Residues Ser-34 and Thr-55 each coordinate Mg(2+). Residue Thr-89 is modified to Phosphothreonine. Lys-98 is covalently cross-linked (Glycyl lysine isopeptide (Lys-Gly) (interchain with G-Cter in ubiquitin)). A phosphoserine mark is found at Ser-116 and Ser-119. Leu-233 lines the ATP pocket. Positions Asp-306–Ala-389 constitute a TGS domain.

It belongs to the TRAFAC class OBG-HflX-like GTPase superfamily. OBG GTPase family. YchF/OLA1 subfamily. In terms of assembly, monomer. Interacts with the 26S proteasome subunit RPT6. Requires Mg(2+) as cofactor.

Its subcellular location is the cytoplasm. Its function is as follows. Hydrolyzes ATP, and can also hydrolyze GTP with lower efficiency. Has lower affinity for GTP. The chain is Obg-like ATPase 1 from Saccharomyces cerevisiae (strain ATCC 204508 / S288c) (Baker's yeast).